We begin with the raw amino-acid sequence, 100 residues long: MQLTPREVEKLMIYTLSDVAFKRKARGLKLNYPEAVSIITVTAMEGARDGKSVEDVMKEASKVLTKDDVMDGVADLIPNVQVEAIFTDGSRLVTVHDPIK.

The protein belongs to the urease gamma subunit family. In terms of assembly, heterotrimer of UreA (gamma), UreB (beta) and UreC (alpha) subunits. Three heterotrimers associate to form the active enzyme.

It is found in the cytoplasm. The catalysed reaction is urea + 2 H2O + H(+) = hydrogencarbonate + 2 NH4(+). The protein operates within nitrogen metabolism; urea degradation; CO(2) and NH(3) from urea (urease route): step 1/1. This Yersinia bercovieri protein is Urease subunit gamma.